A 387-amino-acid chain; its full sequence is Alkanesulfonate monooxygenase (387 aa).

Belongs to the SsuD family.

It carries out the reaction an alkanesulfonate + FMNH2 + O2 = an aldehyde + FMN + sulfite + H2O + 2 H(+). Catalyzes the desulfonation of aliphatic sulfonates. This is Alkanesulfonate monooxygenase from Xanthomonas axonopodis pv. citri (strain 306).